The primary structure comprises 780 residues: ATP-dependent 6-phosphofructokinase, muscle type (780 aa).

N-acetylthreonine is present on threonine 2. The interval 2 to 390 (THEEHHAAKT…NWEVYKLLAH (389 aa)) is N-terminal catalytic PFK domain 1. ATP-binding positions include glycine 25, 88 to 89 (RC), and 118 to 121 (GDGS). Residue aspartate 119 coordinates Mg(2+). At serine 133 the chain carries Phosphoserine. Residues 164–166 (SID), arginine 201, 208–210 (MGR), glutamate 264, arginine 292, and 298–301 (HVQR) each bind substrate. Aspartate 166 serves as the catalytic Proton acceptor. Serine 377 carries the phosphoserine modification. Residues 391–401 (IRPPVSKSGSH) form an interdomain linker region. The tract at residues 402 to 780 (TVAVMNVGAP…SRKRSGEAPA (379 aa)) is C-terminal regulatory PFK domain 2. Beta-D-fructose 2,6-bisphosphate contacts are provided by residues arginine 471 and 528-532 (TVSNN). Serine 530 carries O-linked (GlcNAc) serine glycosylation. The residue at position 557 (lysine 557) is an N6-(2-hydroxyisobutyryl)lysine. Beta-D-fructose 2,6-bisphosphate-binding positions include arginine 566, 573-575 (MGG), glutamate 629, arginine 655, and 661-664 (HMQQ). Residue serine 667 is modified to Phosphoserine. Residue arginine 735 coordinates beta-D-fructose 2,6-bisphosphate. Serine 775 bears the Phosphoserine mark.

This sequence belongs to the phosphofructokinase type A (PFKA) family. ATP-dependent PFK group I subfamily. Eukaryotic two domain clade 'E' sub-subfamily. In terms of assembly, homo- and heterotetramers. Phosphofructokinase (PFK) enzyme functions as a tetramer composed of different combinations of 3 types of subunits, called PFKM (M), PFKL (L) and PFKP (P). The composition of the PFK tetramer differs according to the tissue type it is present in. The kinetic and regulatory properties of the tetrameric enzyme are dependent on the subunit composition, hence can vary across tissues. Interacts (via C-terminus) with HK1 (via N-terminal spermatogenic cell-specific region). It depends on Mg(2+) as a cofactor. Post-translationally, glcNAcylation decreases enzyme activity.

The protein localises to the cytoplasm. It carries out the reaction beta-D-fructose 6-phosphate + ATP = beta-D-fructose 1,6-bisphosphate + ADP + H(+). Its pathway is carbohydrate degradation; glycolysis; D-glyceraldehyde 3-phosphate and glycerone phosphate from D-glucose: step 3/4. Allosterically activated by ADP, AMP, or fructose 2,6-bisphosphate, and allosterically inhibited by ATP or citrate. Its function is as follows. Catalyzes the phosphorylation of D-fructose 6-phosphate to fructose 1,6-bisphosphate by ATP, the first committing step of glycolysis. The sequence is that of ATP-dependent 6-phosphofructokinase, muscle type (PFKM) from Equus caballus (Horse).